The following is a 424-amino-acid chain: Serine--tRNA ligase (424 aa).

The segment covering 1-15 (MIDPKLLRTDPDAVR) has biased composition (basic and acidic residues). Residues 1 to 27 (MIDPKLLRTDPDAVRRSQAARGEDSSV) form a disordered region. 230 to 232 (TSE) lines the L-serine pocket. ATP-binding positions include 261–263 (RRE) and Val277. Residue Glu284 participates in L-serine binding. 348-351 (EITS) contributes to the ATP binding site. L-serine is bound at residue Thr382.

Belongs to the class-II aminoacyl-tRNA synthetase family. Type-1 seryl-tRNA synthetase subfamily. Homodimer. The tRNA molecule binds across the dimer.

It localises to the cytoplasm. It catalyses the reaction tRNA(Ser) + L-serine + ATP = L-seryl-tRNA(Ser) + AMP + diphosphate + H(+). It carries out the reaction tRNA(Sec) + L-serine + ATP = L-seryl-tRNA(Sec) + AMP + diphosphate + H(+). It functions in the pathway aminoacyl-tRNA biosynthesis; selenocysteinyl-tRNA(Sec) biosynthesis; L-seryl-tRNA(Sec) from L-serine and tRNA(Sec): step 1/1. In terms of biological role, catalyzes the attachment of serine to tRNA(Ser). Is also able to aminoacylate tRNA(Sec) with serine, to form the misacylated tRNA L-seryl-tRNA(Sec), which will be further converted into selenocysteinyl-tRNA(Sec). This chain is Serine--tRNA ligase, found in Cutibacterium acnes (strain DSM 16379 / KPA171202) (Propionibacterium acnes).